The chain runs to 1088 residues: RNA-directed RNA polymerase (1088 aa).

Residues Leu501 to Ile687 form the RdRp catalytic domain.

It belongs to the reoviridae RNA-directed RNA polymerase family. As to quaternary structure, interacts with VP3 (Potential). Interacts with VP2; this interaction activates VP1. Interacts with NSP5; this interaction is probably necessary for the formation of functional virus factories. Interacts with NSP2; this interaction is weak. Mg(2+) is required as a cofactor.

Its subcellular location is the virion. The catalysed reaction is RNA(n) + a ribonucleoside 5'-triphosphate = RNA(n+1) + diphosphate. Functionally, RNA-directed RNA polymerase that is involved in both transcription and genome replication. Together with VP3 capping enzyme, forms an enzyme complex positioned near the channels situated at each of the five-fold vertices of the core. Following infection, the outermost layer of the virus is lost, leaving a double-layered particle (DLP) made up of the core and VP6 shell. VP1 then catalyzes the transcription of fully conservative plus-strand genomic RNAs that are extruded through the DLP's channels into the cytoplasm where they function as mRNAs for translation of viral proteins. One copy of each of the viral (+)RNAs is also recruited during core assembly, together with newly synthesized polymerase complexes and VP2. The polymerase of these novo-formed particles catalyzes the synthesis of complementary minus-strands leading to dsRNA formation. To do so, the polymerase specifically recognizes and binds 4 bases 5'-UGUG-3' in the conserved 3'-sequence of plus-strand RNA templates. VP2 presumably activates the autoinhibited VP1-RNA complex to coordinate packaging and genome replication. Once dsRNA synthesis is complete, the polymerase switches to the transcriptional mode, thus providing secondary transcription. The polypeptide is RNA-directed RNA polymerase (Rotavirus A (strain RVA/Cow/United States/NCDV-Lincoln/1969/G6P6[1]) (RV-A)).